Consider the following 118-residue polypeptide: V-type proton ATPase subunit G 3 (118 aa).

The segment at 1–34 is disordered; sequence MTSQSQGIHQLLQAEKRAKDKLEEAKKRKGKRLK. Residues 5-54 adopt a coiled-coil conformation; that stretch reads SQGIHQLLQAEKRAKDKLEEAKKRKGKRLKQAKEEAMVEIDQYRMQRDKE. Residues 14–26 are compositionally biased toward basic and acidic residues; the sequence is AEKRAKDKLEEAK.

Belongs to the V-ATPase G subunit family. As to quaternary structure, V-ATPase is a heteromultimeric enzyme made up of two complexes: the ATP-hydrolytic V1 complex and the proton translocation V0 complex. The V1 complex consists of three catalytic AB heterodimers that form a heterohexamer, three peripheral stalks each consisting of EG heterodimers, one central rotor including subunits D and F, and the regulatory subunits C and H. The proton translocation complex V0 consists of the proton transport subunit a, a ring of proteolipid subunits c9c'', rotary subunit d, subunits e and f, and the accessory subunits ATP6AP1/Ac45 and ATP6AP2/PRR. In terms of tissue distribution, kidney.

Functionally, subunit of the V1 complex of vacuolar(H+)-ATPase (V-ATPase), a multisubunit enzyme composed of a peripheral complex (V1) that hydrolyzes ATP and a membrane integral complex (V0) that translocates protons. V-ATPase is responsible for acidifying and maintaining the pH of intracellular compartments and in some cell types, is targeted to the plasma membrane, where it is responsible for acidifying the extracellular environment. This chain is V-type proton ATPase subunit G 3 (ATP6V1G3), found in Homo sapiens (Human).